The chain runs to 217 residues: GTP cyclohydrolase 1 (217 aa).

Cys109, His112, and Cys180 together coordinate Zn(2+).

This sequence belongs to the GTP cyclohydrolase I family. In terms of assembly, homomer.

The enzyme catalyses GTP + H2O = 7,8-dihydroneopterin 3'-triphosphate + formate + H(+). It functions in the pathway cofactor biosynthesis; 7,8-dihydroneopterin triphosphate biosynthesis; 7,8-dihydroneopterin triphosphate from GTP: step 1/1. In Aliivibrio salmonicida (strain LFI1238) (Vibrio salmonicida (strain LFI1238)), this protein is GTP cyclohydrolase 1.